A 250-amino-acid chain; its full sequence is Type III pantothenate kinase (250 aa).

An ATP-binding site is contributed by Asp-13–Lys-20. Gly-110–Leu-113 contributes to the substrate binding site. Residue Asp-112 is the Proton acceptor of the active site. Thr-134 is a binding site for ATP. Position 186 (Thr-186) interacts with substrate.

Belongs to the type III pantothenate kinase family. Homodimer. It depends on NH4(+) as a cofactor. The cofactor is K(+).

The protein localises to the cytoplasm. The catalysed reaction is (R)-pantothenate + ATP = (R)-4'-phosphopantothenate + ADP + H(+). Its pathway is cofactor biosynthesis; coenzyme A biosynthesis; CoA from (R)-pantothenate: step 1/5. Catalyzes the phosphorylation of pantothenate (Pan), the first step in CoA biosynthesis. This Mycoplasmopsis synoviae (strain 53) (Mycoplasma synoviae) protein is Type III pantothenate kinase.